A 402-amino-acid chain; its full sequence is Serine/threonine transporter SstT (402 aa).

Transmembrane regions (helical) follow at residues 19-39 (IGVV…AIGL), 43-63 (LFVG…VISA), 86-106 (TFAA…TLIL), 138-158 (AITE…GLAM), 179-199 (VVKW…FTSI), 212-232 (LLIL…NPII), 287-307 (IPLG…ILTL), 327-347 (VVAA…LLLI), and 354-374 (FGIS…VGVI).

This sequence belongs to the dicarboxylate/amino acid:cation symporter (DAACS) (TC 2.A.23) family.

The protein localises to the cell membrane. The catalysed reaction is L-serine(in) + Na(+)(in) = L-serine(out) + Na(+)(out). The enzyme catalyses L-threonine(in) + Na(+)(in) = L-threonine(out) + Na(+)(out). Involved in the import of serine and threonine into the cell, with the concomitant import of sodium (symport system). The polypeptide is Serine/threonine transporter SstT (Streptococcus agalactiae serotype III (strain NEM316)).